The sequence spans 449 residues: Glucose-6-phosphate isomerase (449 aa).

The active-site Proton donor is E291. Catalysis depends on residues H312 and K426.

This sequence belongs to the GPI family.

Its subcellular location is the cytoplasm. The enzyme catalyses alpha-D-glucose 6-phosphate = beta-D-fructose 6-phosphate. It functions in the pathway carbohydrate biosynthesis; gluconeogenesis. The protein operates within carbohydrate degradation; glycolysis; D-glyceraldehyde 3-phosphate and glycerone phosphate from D-glucose: step 2/4. Its function is as follows. Catalyzes the reversible isomerization of glucose-6-phosphate to fructose-6-phosphate. In Streptococcus pneumoniae (strain CGSP14), this protein is Glucose-6-phosphate isomerase.